We begin with the raw amino-acid sequence, 422 residues long: Histidine--tRNA ligase (422 aa).

The protein belongs to the class-II aminoacyl-tRNA synthetase family. Homodimer.

It is found in the cytoplasm. It carries out the reaction tRNA(His) + L-histidine + ATP = L-histidyl-tRNA(His) + AMP + diphosphate + H(+). This Nocardia farcinica (strain IFM 10152) protein is Histidine--tRNA ligase.